The chain runs to 645 residues: Glucans biosynthesis glucosyltransferase H (645 aa).

Polar residues predominate over residues 1–13 (MDGTVTPSPTTTA). The interval 1-32 (MDGTVTPSPTTTAMPPVSALDAGTPTLPPEAP) is disordered. Transmembrane regions (helical) follow at residues 64–84 (LIGGTFATTAIAVWVMLSVLW), 98–118 (LFVLLFAWIAMSFASAVAGFV), 423–443 (APMWGLLMLIGIGIPLAGGGI), 465–485 (AIWIFICTMFVLLAPKLLGYI), 504–524 (AVSILLETVLAALMAPVVMYL), 559–579 (YGGLTVFGLFMGAVAYAVSPA), and 580–600 (LAAWMGPVIVGMALSIPVVAL).

Belongs to the glycosyltransferase 2 family. OpgH subfamily.

It is found in the cell inner membrane. It functions in the pathway glycan metabolism; osmoregulated periplasmic glucan (OPG) biosynthesis. In terms of biological role, involved in the biosynthesis of osmoregulated periplasmic glucans (OPGs). The chain is Glucans biosynthesis glucosyltransferase H from Xanthomonas euvesicatoria pv. vesicatoria (strain 85-10) (Xanthomonas campestris pv. vesicatoria).